Consider the following 478-residue polypeptide: MARKTLRARRFFSLIFPFFFMTSVYAEQTSVSAKTVTVEAKNETFSPQHPDQYQSWKATSEQSAREDALAEDPRLVILWAGYPFSRDYNKPRGHAYAVTDVRETLRTGAPKTAEEGPLPMACWSCKSPDVARLIQQEGEDGYFHGKWARGGPEIVNDLGCADCHNTASDDFAQGKPALTLSRPYAERAMEAIGKPFDKAGRFDQQSMVCGQCHVEYYFEGKNKAVKFPWDEGMKVENMEKYYDAIAFSDWTNSLSKTPMLKAQHPEYETWSAGIHGKNNVTCIDCHMPKVQNAEGKLYTDHKIGNPFDNFAQTCANCHTQDKASLQKVVAERKQAIHDLKIKVEDQLVHAHFEAKAAWDAGATDAEMKPILNDIRHAQWRWDLAIASHGIHMHAPEEGLRMLGSAMDKAADARTKLARLLATKGITHEIPLPDISTKEKAQKAIGLNMQQINAEKQDFLKTVVPQWEDQARKNGLLSQ.

Residues 1-26 (MARKTLRARRFFSLIFPFFFMTSVYA) form the signal peptide. His94 is a binding site for heme c. Heme is bound by residues Cys122, Cys125, and Lys126. Positions 160, 163, 164, 209, 212, and 213 each coordinate heme c. Residues Glu215, Tyr216, Lys261, and Gln263 each coordinate Ca(2+). Residue Tyr216 coordinates substrate. His264 serves as a coordination point for substrate. Heme c is bound by residues His275, Cys282, Cys285, His286, His301, Cys314, Cys317, His318, and His393.

This sequence belongs to the cytochrome c-552 family. Ca(2+) is required as a cofactor. It depends on heme c as a cofactor.

It localises to the periplasm. The enzyme catalyses 6 Fe(III)-[cytochrome c] + NH4(+) + 2 H2O = 6 Fe(II)-[cytochrome c] + nitrite + 8 H(+). It functions in the pathway nitrogen metabolism; nitrate reduction (assimilation). Its function is as follows. Catalyzes the reduction of nitrite to ammonia, consuming six electrons in the process. The sequence is that of Cytochrome c-552 from Salmonella arizonae (strain ATCC BAA-731 / CDC346-86 / RSK2980).